The chain runs to 285 residues: Chlorite dismutase (285 aa).

The N-terminal stretch at 1-38 (MKVRCVSLVAAGLLTIAGSAIGQPAPAPMPAMAPAAKP) is a signal peptide. Position 105 (Glu-105) interacts with Ca(2+). His-205 is a heme binding site. Arg-218 serves as the catalytic Proton acceptor. The Ca(2+) site is built by Asp-227 and Thr-266.

The protein belongs to the chlorite dismutase family. In terms of assembly, homopentamer. The cofactor is heme b.

Its subcellular location is the periplasm. The catalysed reaction is chloride + O2 = chlorite. In terms of biological role, catalyzes the heme-dependent decomposition of chlorite to O(2) and chloride with high efficiency and specificity. Used to detoxify chlorite, a by-product of the reduction of perchlorate, a primarily anthropogenic pollutant, in perchlorate-respiring bacteria. The polypeptide is Chlorite dismutase (cld) (Ideonella dechloratans).